The sequence spans 450 residues: MCDFMDYIQLAFYDASKWNRDNSYSRLTTTANALLDFSTPERLKVNLSSLSTPHFATTYTLGTVGLIDGSISYLFTTIPLHNTPSRSSLIPLRKLVPGYRQIYPPSIPIEYPTANDHSGIPAAVRSKADNPKMKPTLLHATLHLPPPTTLTGLFICRLSSTTQLSLAVCSSRAPASKSAPQATLLTQIFHDTGKYSSEFLFSTDNALLGFKGLWNFGPDPRKPTRGDPASQRSRPLLSLLSAGGEVYYSPVSSVVGLSTGLRFATLPAATENAHSAFPYTLTLTLTPLTGSMSTTYSLLASPNLAFSSRFGFNVYSWESEMVAGCELWRRSKSKSQNIYPSAVDNLAWARLKMGVPDTAVSVNPEHELSYFHKEGHNSSHASDSVIKVRVDQSWNIRALWEGRVKELLISAGVALGPASRSTLSYASPVAPGGLSSYGWKSVGVSVLYAS.

It belongs to the MDM10 family. In terms of assembly, component of the ER-mitochondria encounter structure (ERMES) or MDM complex, composed of MMM1, MDM10, MDM12 and MDM34. Associates with the mitochondrial outer membrane sorting assembly machinery SAM(core) complex.

The protein resides in the mitochondrion outer membrane. Component of the ERMES/MDM complex, which serves as a molecular tether to connect the endoplasmic reticulum and mitochondria. Components of this complex are involved in the control of mitochondrial shape and protein biogenesis and may function in phospholipid exchange. MDM10 is involved in the late assembly steps of the general translocase of the mitochondrial outer membrane (TOM complex). Functions in the TOM40-specific route of the assembly of outer membrane beta-barrel proteins, including the association of TOM40 with the receptor TOM22 and small TOM proteins. Can associate with the SAM(core) complex as well as the MDM12-MMM1 complex, both involved in late steps of the major beta-barrel assembly pathway, that is responsible for biogenesis of all outer membrane beta-barrel proteins. May act as a switch that shuttles between both complexes and channels precursor proteins into the TOM40-specific pathway. Plays a role in mitochondrial morphology and in the inheritance of mitochondria. This chain is Mitochondrial distribution and morphology protein 10, found in Paracoccidioides lutzii (strain ATCC MYA-826 / Pb01) (Paracoccidioides brasiliensis).